A 268-amino-acid polypeptide reads, in one-letter code: uncharacterized protein (268 aa).

This sequence belongs to the LarE family.

This is an uncharacterized protein from Synechocystis sp. (strain ATCC 27184 / PCC 6803 / Kazusa).